A 333-amino-acid chain; its full sequence is Probable cytosolic iron-sulfur protein assembly protein ciao1-B (333 aa).

WD repeat units follow at residues 14-53 (HPDS…WECK), 59-98 (GHQR…FECL), 103-142 (GHEN…EYEC), 148-187 (SHTQ…WECR), 192-231 (GHTS…GGQE), 246-285 (FHGR…DPDQ), and 297-333 (AHTQ…QSGV).

It belongs to the WD repeat CIA1 family. As to quaternary structure, component of the CIA complex.

Key component of the cytosolic iron-sulfur protein assembly (CIA) complex, a multiprotein complex that mediates the incorporation of iron-sulfur cluster into extramitochondrial Fe/S proteins. The sequence is that of Probable cytosolic iron-sulfur protein assembly protein ciao1-B (ciao1b) from Salmo salar (Atlantic salmon).